Consider the following 853-residue polypeptide: Eukaryotic translation initiation factor 3 subunit C (853 aa).

The interval 1-78 is disordered; it reads MSRFFAASDS…EDEDQNKVLK (78 aa). Residues 11–46 are compositionally biased toward acidic residues; it reads SSEESSEEELYSDNEASAQEDSDKDSDDDDSDDDDS. The PCI domain occupies 599–773; it reads FHMHINLELL…SAIIFRKGVE (175 aa). The segment at 798 to 853 is disordered; that stretch reads TLEQRTQGTANAFERQGGRGGRGGGRGRGGGRGGGVPRGGRNQQFTGGALGRAIQA. The span at 815–835 shows a compositional bias: gly residues; the sequence is GRGGRGGGRGRGGGRGGGVPR.

Belongs to the eIF-3 subunit C family. In terms of assembly, component of the eukaryotic translation initiation factor 3 (eIF-3) complex.

The protein localises to the cytoplasm. In terms of biological role, component of the eukaryotic translation initiation factor 3 (eIF-3) complex, which is involved in protein synthesis of a specialized repertoire of mRNAs and, together with other initiation factors, stimulates binding of mRNA and methionyl-tRNAi to the 40S ribosome. The eIF-3 complex specifically targets and initiates translation of a subset of mRNAs involved in cell proliferation. This chain is Eukaryotic translation initiation factor 3 subunit C, found in Phaeosphaeria nodorum (strain SN15 / ATCC MYA-4574 / FGSC 10173) (Glume blotch fungus).